We begin with the raw amino-acid sequence, 560 residues long: Cilia- and flagella-associated protein 184 (560 aa).

Positions 1 to 12 are enriched in basic and acidic residues; sequence MEGGSEHTKDPG. The segment at 1–209 is disordered; that stretch reads MEGGSEHTKD…QEEGKPLGGR (209 aa). Composition is skewed to acidic residues over residues 41–61 and 101–110; these read GELESEPEEEEEEEEEEEEEA and EPEEPAEAGA. Basic and acidic residues-rich tracts occupy residues 127 to 144 and 179 to 209; these read AEARAEELEQAAEGKEVR and ETRRDGAESEGRAGEGRPAKSQEEGKPLGGR. 2 coiled-coil regions span residues 357–481 and 510–536; these read QAAL…QGRD and DSLLRDLEEKVDKTQLLHQRLESLKRH.

This sequence belongs to the CFAP184 family. Forms a complex with CFAP263; the interaction is required for functional activity in cilia.

Its subcellular location is the cell projection. It is found in the cilium. It localises to the cytoplasm. The protein resides in the cytoskeleton. The protein localises to the microtubule organizing center. Its subcellular location is the centrosome. Its function is as follows. In complex with CFAP263, acts as a regulator of ciliary beating that connects radial spoke 3 (RS3) to the inner dynein arm (IDA) and the nexin-dynein regulatory complex (N-DRC). The complex is positioned parallel to N-DRC and forms a connection between the arch at the base of RS3, the IDA tail and N-DRC. This is Cilia- and flagella-associated protein 184 (CFAP184) from Macaca fascicularis (Crab-eating macaque).